Reading from the N-terminus, the 93-residue chain is MYPTRPHYWRRRLSINRPQAFLLLILCLFFIHHCDASRFSSSSVFYRNPNYDHSNNTVRRGHFLGFLPRHLPVPASAPSRKHNDIGIQALLSP.

The signal sequence occupies residues 1 to 35 (MYPTRPHYWRRRLSINRPQAFLLLILCLFFIHHCD).

As to expression, expressed in mainly in buds. Lower levels in roots. Detected at the base of pedicel, in the floral and funicule abscission zones, in vascular tissues, in guard cells of young seedlings and in hydathodes.

The protein localises to the secreted. Its subcellular location is the extracellular space. Its function is as follows. May be involved in floral abscission. This Arabidopsis thaliana (Mouse-ear cress) protein is Protein IDA-LIKE 4 (IDL4).